Consider the following 248-residue polypeptide: Transcription factor bHLH35 (248 aa).

The span at 37 to 54 shows a compositional bias: low complexity; sequence SGSYDSSSPDGAASSPAS. Positions 37–60 are disordered; the sequence is SGSYDSSSPDGAASSPASKNIVSE. Residues 51 to 100 form the bHLH domain; that stretch reads SPASKNIVSERNRRQKLNQRLFALRSVVPNITKMDKASIIKDAISYIEGL.

As to quaternary structure, homodimer. Expressed constitutively in roots, leaves, stems, and flowers.

It is found in the nucleus. This Arabidopsis thaliana (Mouse-ear cress) protein is Transcription factor bHLH35 (BHLH35).